Consider the following 344-residue polypeptide: Nuclear distribution protein nudE homolog 1 (344 aa).

A self-association region spans residues Met-1 to Ile-93. Positions Trp-18–Lys-188 form a coiled coil. A compositionally biased stretch (basic and acidic residues) spans Glu-30–Glu-47. The tract at residues Glu-30–Leu-65 is disordered. The tract at residues Glu-88–Leu-156 is interaction with PAFAH1B1. Residues Gln-167 to Ala-290 form an interaction with CENPF region. Residues Ala-181 to Thr-243 are disordered. Residues Ala-208 to Glu-230 show a composition bias toward polar residues. Residue Ser-211 is modified to Phosphoserine. A phosphothreonine mark is found at Thr-215, Thr-228, Thr-243, and Thr-246. A lipid anchor (S-palmitoyl cysteine; by ZDHHC2, ZDHHC3 and ZDHHC7) is attached at Cys-274. Positions Tyr-279–Gln-337 are disordered. Residue Ser-282 is modified to Phosphoserine. Residues Lys-296 to Pro-305 are compositionally biased toward basic and acidic residues. Low complexity predominate over residues Pro-324–Ser-335.

The protein belongs to the nudE family. As to quaternary structure, homodimer. Interacts with CNTRL, LIS1, dynein, SLMAP and TCP1. Interacts with CENPF, dynactin, tubulin gamma, PAFAH1B1, PCM1 and PCNT. Interacts with ZNF365. Interacts with GTP-bound RAB9A and RAB9B; the interaction leads to RAB9-dynein motor tethering. Interacts (via C-terminus) with MCRS1 (via C-terminus); phosphorylation of NDE1 inhibits the interaction. Post-translationally, phosphorylated in mitosis. Phosphorylation at Thr-246 is essential for the G2/M transition. In terms of tissue distribution, expressed in brain, heart, kidney, liver, lung, skeletal muscle, spleen and testis.

The protein localises to the cytoplasm. It localises to the cytoskeleton. Its subcellular location is the microtubule organizing center. The protein resides in the centrosome. It is found in the spindle. The protein localises to the chromosome. It localises to the centromere. Its subcellular location is the kinetochore. The protein resides in the cleavage furrow. It is found in the cytoplasmic vesicle membrane. Required for centrosome duplication and formation and function of the mitotic spindle. Essential for the development of the cerebral cortex. May regulate the production of neurons by controlling the orientation of the mitotic spindle during division of cortical neuronal progenitors of the proliferative ventricular zone of the brain. Orientation of the division plane perpendicular to the layers of the cortex gives rise to two proliferative neuronal progenitors whereas parallel orientation of the division plane yields one proliferative neuronal progenitor and a postmitotic neuron. A premature shift towards a neuronal fate within the progenitor population may result in an overall reduction in the final number of neurons and an increase in the number of neurons in the deeper layers of the cortex. Acts as a RAB9A/B effector that tethers RAB9-associated late endosomes to the dynein motor for their retrograde transport to the trans-Golgi network. This chain is Nuclear distribution protein nudE homolog 1, found in Rattus norvegicus (Rat).